Consider the following 389-residue polypeptide: Transcription factor MYB97 (389 aa).

2 consecutive HTH myb-type domains span residues 16 to 68 (GVVL…ANHL) and 69 to 123 (RPNL…KRFQ). 2 DNA-binding regions (H-T-H motif) span residues 44–68 (WNSVQKKTWLARCGKSCRLRWANHL) and 96–119 (WARMAAQLPGRTDNEIKNYWNTRL). Positions 131 to 159 (PPEYSQNNHQQQMYPQQPSSPLPSQTPAS) are disordered. Over residues 140–159 (QQQMYPQQPSSPLPSQTPAS) the composition is skewed to low complexity.

As to expression, accumulates in pollen grains and pollen tube. Mostly expressed in mature pollen grains, and, to a lower extent, in inflorescences and siliques.

The protein resides in the nucleus. Functionally, transcription activator. Binds to 5'-CAACTGTC-3' and/or 5'-TAACAAA-3' motif in target gene promoter to promote their expression. Together with MYB101 and MYB120, functions as a male factor that controls pollen tube-synergid interaction in fertilization. Required for pollen tube growth arrest and sperm cell release in the female gametophyte, probably via the regulation of pollen tube-specific gene expression. In Arabidopsis thaliana (Mouse-ear cress), this protein is Transcription factor MYB97.